Consider the following 67-residue polypeptide: Probable Sec-independent protein translocase protein TatE (67 aa).

The chain crosses the membrane as a helical span at residues 4-21 (ISITKLLVVAALVVLLFG). The tract at residues 46-67 (EDAGAKKEAGGDIQAEKLSHKE) is disordered.

The protein belongs to the TatA/E family. TatE subfamily.

Its subcellular location is the cell inner membrane. Functionally, part of the twin-arginine translocation (Tat) system that transports large folded proteins containing a characteristic twin-arginine motif in their signal peptide across membranes. TatE shares overlapping functions with TatA. The sequence is that of Probable Sec-independent protein translocase protein TatE from Citrobacter koseri (strain ATCC BAA-895 / CDC 4225-83 / SGSC4696).